We begin with the raw amino-acid sequence, 393 residues long: Phosphoenolpyruvate/phosphate translocator 3, chloroplastic (393 aa).

The transit peptide at 1–65 (MQRAAAASRA…LSGGRAVTAR (65 aa)) directs the protein to the chloroplast. 7 consecutive transmembrane segments (helical) span residues 89–109 (LAET…NIYF), 124–144 (YTIT…MWAL), 164–183 (AAGH…KVAV), 195–217 (FFTV…LGSL), 232–249 (LSFN…NLLY), 270–290 (INLF…LMLF), and 362–382 (TPIS…VFLY). The region spanning 123–228 (PYTITAFQLA…PIVGGVALAS (106 aa)) is the EamA domain.

Belongs to the TPT transporter family. PPT (TC 2.A.7.9) subfamily.

The protein resides in the plastid. It localises to the chloroplast membrane. In terms of biological role, phosphoenolpyruvate/phosphate translocator that transports phosphoenolpyruvate (PEP) and dihydroxyacetone phosphate. The sequence is that of Phosphoenolpyruvate/phosphate translocator 3, chloroplastic (PPT3) from Oryza sativa subsp. japonica (Rice).